The following is a 344-amino-acid chain: DNA-directed RNA polymerase subunit alpha (344 aa).

The interval 1–239 (MADHWNKLTR…DQLQSFISFD (239 aa)) is alpha N-terminal domain (alpha-NTD). The interval 254-344 (VLPYDHNLLR…ENLSKQYSED (91 aa)) is alpha C-terminal domain (alpha-CTD).

This sequence belongs to the RNA polymerase alpha chain family. In terms of assembly, homodimer. The RNAP catalytic core consists of 2 alpha, 1 beta, 1 beta' and 1 omega subunit. When a sigma factor is associated with the core the holoenzyme is formed, which can initiate transcription.

The catalysed reaction is RNA(n) + a ribonucleoside 5'-triphosphate = RNA(n+1) + diphosphate. Its function is as follows. DNA-dependent RNA polymerase catalyzes the transcription of DNA into RNA using the four ribonucleoside triphosphates as substrates. The polypeptide is DNA-directed RNA polymerase subunit alpha (Anaplasma phagocytophilum (strain HZ)).